The chain runs to 111 residues: Large ribosomal subunit protein uL22 (111 aa).

This sequence belongs to the universal ribosomal protein uL22 family. Part of the 50S ribosomal subunit.

Its function is as follows. This protein binds specifically to 23S rRNA; its binding is stimulated by other ribosomal proteins, e.g. L4, L17, and L20. It is important during the early stages of 50S assembly. It makes multiple contacts with different domains of the 23S rRNA in the assembled 50S subunit and ribosome. Functionally, the globular domain of the protein is located near the polypeptide exit tunnel on the outside of the subunit, while an extended beta-hairpin is found that lines the wall of the exit tunnel in the center of the 70S ribosome. The chain is Large ribosomal subunit protein uL22 from Polynucleobacter necessarius subsp. necessarius (strain STIR1).